Reading from the N-terminus, the 923-residue chain is DNA gyrase subunit A (923 aa).

Positions Leu-34–Leu-534 constitute a Topo IIA-type catalytic domain. The active-site O-(5'-phospho-DNA)-tyrosine intermediate is Tyr-122. The short motif at Gln-561–Gly-567 is the GyrA-box element. Residues Glu-881–Glu-923 are disordered. Acidic residues-rich tracts occupy residues Gly-888 to Ala-901 and Ala-908 to Glu-923.

Belongs to the type II topoisomerase GyrA/ParC subunit family. As to quaternary structure, heterotetramer, composed of two GyrA and two GyrB chains. In the heterotetramer, GyrA contains the active site tyrosine that forms a transient covalent intermediate with DNA, while GyrB binds cofactors and catalyzes ATP hydrolysis.

The protein localises to the cytoplasm. The catalysed reaction is ATP-dependent breakage, passage and rejoining of double-stranded DNA.. In terms of biological role, a type II topoisomerase that negatively supercoils closed circular double-stranded (ds) DNA in an ATP-dependent manner to modulate DNA topology and maintain chromosomes in an underwound state. Negative supercoiling favors strand separation, and DNA replication, transcription, recombination and repair, all of which involve strand separation. Also able to catalyze the interconversion of other topological isomers of dsDNA rings, including catenanes and knotted rings. Type II topoisomerases break and join 2 DNA strands simultaneously in an ATP-dependent manner. The chain is DNA gyrase subunit A from Pseudomonas aeruginosa (strain ATCC 15692 / DSM 22644 / CIP 104116 / JCM 14847 / LMG 12228 / 1C / PRS 101 / PAO1).